A 991-amino-acid polypeptide reads, in one-letter code: Glutamate receptor 1 (991 aa).

The first 27 residues, 1–27 (MHSRLKFLAYLHFICASSIFWPEFSSA), serve as a signal peptide directing secretion. Over 28–611 (QQQQQTVSLT…VFSFLNPLSQ (584 aa)) the chain is Extracellular. 4 N-linked (GlcNAc...) asparagine glycosylation sites follow: N67, N195, N208, and N281. 2 disordered regions span residues 300–321 (DSRKRLEPSGQSQSQNAGGPNS) and 354–379 (FRSNHLQRRSHGGSSSSSATGTNESS). Over residues 308-318 (SGQSQSQNAGG) the composition is skewed to polar residues. Residues 365–379 (GGSSSSSATGTNESS) show a composition bias toward low complexity. N-linked (GlcNAc...) asparagine glycans are attached at residues N376, N385, N426, N437, and N477. The helical transmembrane segment at 612-632 (EIWISVILSYVGVSFVLYFVT) threads the bilayer. At 633–710 (RFPPYEWRIV…PSIAGRIAAA (78 aa)) the chain is on the cytoplasmic side. The chain crosses the membrane as a helical span at residues 711-731 (VWWFFTIILISSYTANLAAFL). The Extracellular portion of the chain corresponds to 732-895 (TVERMVAPIK…STPNELSLSN (164 aa)). Residues 896-916 (VAGIYYILIGGLLLAVIVAIM) traverse the membrane as a helical segment. At 917–991 (EFFCRNKTPQ…ASNVRYQYSM (75 aa)) the chain is on the cytoplasmic side.

It belongs to the glutamate-gated ion channel (TC 1.A.10.1) family. Homooligomer. Central nervous system.

It localises to the cell membrane. The protein localises to the postsynaptic cell membrane. Functionally, receptor for glutamate. L-glutamate acts as an excitatory neurotransmitter at many synapses in the central nervous system. The postsynaptic actions of Glu are mediated by a variety of receptors that are named according to their selective agonists. Forms ligand-gated ion channels which are activated by kainate. The sequence is that of Glutamate receptor 1 (GluRIA) from Drosophila melanogaster (Fruit fly).